We begin with the raw amino-acid sequence, 458 residues long: Sushi repeat-containing protein SRPX2 (458 aa).

Positions 1–18 (MEASITVLLFAFTKVASS) are cleaved as a signal peptide. Sushi domains are found at residues 62 to 112 (ATCY…HCRR), 113 to 171 (IQCH…VCVD), and 255 to 314 (RRCP…TCTP). Cystine bridges form between C64–C98, C84–C110, C115–C156, and C142–C169. In terms of domain architecture, HYR spans 170–254 (VDLDPPKIQC…SCKFIVKVQV (85 aa)). Intrachain disulfides connect C257/C299 and C285/C312.

In terms of assembly, forms homooligomers.

The protein localises to the secreted. It is found in the cytoplasm. The protein resides in the cell surface. It localises to the synapse. Functionally, may play a role in angiogenesis, synapse formation, cellular migration and adhesion. This Xenopus laevis (African clawed frog) protein is Sushi repeat-containing protein SRPX2 (srpx2).